The primary structure comprises 761 residues: Prolyl oligopeptidase A (761 aa).

Active-site charge relay system residues include S606, D690, and H726.

The protein belongs to the peptidase S9A family. Monomer.

It carries out the reaction Hydrolysis of Pro-|-Xaa &gt;&gt; Ala-|-Xaa in oligopeptides.. Functionally, housekeeping prolyl oligopeptidase (POP) that behaves like a conventional POP by cleaving peptide bonds on the C-terminal side of prolyl residues within peptides that are up to approximately 30 amino acids long. This chain is Prolyl oligopeptidase A, found in Amanita bisporigera (Destroying angel).